Here is a 140-residue protein sequence, read N- to C-terminus: Putative peptidyl-tRNA hydrolase PTRHD1 (140 aa).

Belongs to the PTH2 family. PTRHD1 subfamily.

The enzyme catalyses an N-acyl-L-alpha-aminoacyl-tRNA + H2O = an N-acyl-L-amino acid + a tRNA + H(+). Functionally, as a putative peptidyl-tRNA hydrolase, it might be involved in releasing tRNAs from the ribosome during protein synthesis. Some evidence, however, suggests that it lacks peptidyl-tRNA hydrolase activity. The sequence is that of Putative peptidyl-tRNA hydrolase PTRHD1 (PTRHD1) from Homo sapiens (Human).